The following is a 442-amino-acid chain: Cell cycle checkpoint control protein RAD9B (442 aa).

Disordered regions lie at residues 370-392 (EVPE…TEDV) and 422-442 (QSLA…FSTF). Ser387 carries the post-translational modification Phosphoserine.

Belongs to the rad9 family. Interacts with HUS1, HUS1B, RAD1, RAD9A and RAD17.

The protein is Cell cycle checkpoint control protein RAD9B (RAD9B) of Bos taurus (Bovine).